The sequence spans 295 residues: Probable alpha-L-glutamate ligase 1 (295 aa).

One can recognise an ATP-grasp domain in the interval 104–287; sequence MQLLSRKGIG…VANAIIEFIE (184 aa). Residues K141, 178–179, D187, and 211–213 each bind ATP; these read EY and RSN. Residues D248, E260, and N262 each coordinate Mg(2+). Mn(2+) contacts are provided by D248, E260, and N262.

The protein belongs to the RimK family. The cofactor is Mg(2+). Mn(2+) is required as a cofactor.

The protein is Probable alpha-L-glutamate ligase 1 of Shewanella denitrificans (strain OS217 / ATCC BAA-1090 / DSM 15013).